The chain runs to 1543 residues: DNA-directed RNA polymerase subunit beta' (1543 aa).

Positions 60, 62, 75, and 78 each coordinate Zn(2+). Mg(2+)-binding residues include D627, D629, and D631. Residues C1017, C1097, C1104, and C1107 each coordinate Zn(2+). 2 disordered regions span residues 1466 to 1490 (PADREVPAATPAPAVMSEPKPAPPR) and 1522 to 1543 (AEEGRKPTLSELLGTDEDEENV).

The protein belongs to the RNA polymerase beta' chain family. As to quaternary structure, the RNAP catalytic core consists of 2 alpha, 1 beta, 1 beta' and 1 omega subunit. When a sigma factor is associated with the core the holoenzyme is formed, which can initiate transcription. Requires Mg(2+) as cofactor. Zn(2+) is required as a cofactor.

The enzyme catalyses RNA(n) + a ribonucleoside 5'-triphosphate = RNA(n+1) + diphosphate. DNA-dependent RNA polymerase catalyzes the transcription of DNA into RNA using the four ribonucleoside triphosphates as substrates. This chain is DNA-directed RNA polymerase subunit beta', found in Herpetosiphon aurantiacus (strain ATCC 23779 / DSM 785 / 114-95).